A 526-amino-acid chain; its full sequence is Thymocyte selection-associated high mobility group box protein TOX (526 aa).

Polar residues predominate over residues 194-203; it reads NMGGTNVAHN. Residues 194–264 are disordered; sequence NMGGTNVAHN…KKDPNEPQKP (71 aa). The segment covering 209 to 220 has biased composition (low complexity); that stretch reads GSKSATPSPSSS. A compositionally biased stretch (basic and acidic residues) spans 228 to 245; that stretch reads DASKINGGEKRPASDMGK. The Nuclear localization signal motif lies at 237-256; the sequence is KRPASDMGKKPKTPKKKKKK. Residues 246–256 show a composition bias toward basic residues; the sequence is KPKTPKKKKKK. A DNA-binding region (HMG box) is located at residues 261–329; that stretch reads PQKPVSAYAL…EYLKQLAAYR (69 aa).

It belongs to the high motility group (HMG) box superfamily. As to quaternary structure, interacts with HBO1 complex composed at least of KAT7/HBO1, ING4, MEAF6, and JADE2; this complex is involved in histone acetylation. Interacts with DNMT1, LEO1, PAF1, SAP130 and SIN3A; these interactors regulate chromatin remodeling. Interacts with an array of proteins involved in RNA processing and translation and DNA replication. In terms of tissue distribution, expressed in neurons of the subventricular zone (at protein level). Expressed in distinct subpopulations of thymocytes undergoing positive selection: double CD4-positive CD8-positive (DP) cells, CD4-positive CD8-low transitional cells and in single CD4-positive and CD8-positive cells (at protein level). Expressed in ILC progenitors and mature ILC subsets: ILC1, ILC2 and ILC3 (at protein level). Expressed in lymphoid tissue-inducer cells and bone marrow NK cell subsets. Abundant in thymus, liver and brain. Also detected in small intestine, spleen, stomach and testis. Highly expressed in tumor-infiltrating CD8-positive T cells (at protein level).

It is found in the nucleus. Transcriptional regulator with a major role in neural stem cell commitment and corticogenesis as well as in lymphoid cell development and lymphoid tissue organogenesis. Binds to GC-rich DNA sequences in the proximity of transcription start sites and may alter chromatin structure, modifying access of transcription factors to DNA. During cortical development, controls the neural stem cell pool by inhibiting the switch from proliferative to differentiating progenitors. Beyond progenitor cells, promotes neurite outgrowth in newborn neurons migrating to reach the cortical plate. May activate or repress critical genes for neural stem cell fate such as SOX2, EOMES and ROBO2. Plays an essential role in the development of lymphoid tissue-inducer (LTi) cells, a subset necessary for the formation of secondary lymphoid organs: peripheral lymph nodes and Peyer's patches. Acts as a developmental checkpoint and regulates thymocyte positive selection toward T cell lineage commitment. Required for the development of various T cell subsets, including CD4-positive helper T cells, CD8-positive cytotoxic T cells, regulatory T cells and CD1D-dependent natural killer T (NKT) cells. Required for the differentiation of common lymphoid progenitors (CMP) to innate lymphoid cells (ILC). May regulate the NOTCH-mediated gene program, promoting differentiation of the ILC lineage. Required at the progenitor phase of NK cell development in the bone marrow to specify NK cell lineage commitment. Upon chronic antigen stimulation, diverts T cell development by promoting the generation of exhaustive T cells, while suppressing effector and memory T cell programming. May regulate the expression of genes encoding inhibitory receptors such as PDCD1 and induce the exhaustion program, to prevent the overstimulation of T cells and activation-induced cell death. This Mus musculus (Mouse) protein is Thymocyte selection-associated high mobility group box protein TOX.